A 129-amino-acid chain; its full sequence is Small ribosomal subunit protein uS11 (129 aa).

Belongs to the universal ribosomal protein uS11 family. Part of the 30S ribosomal subunit. Interacts with proteins S7 and S18. Binds to IF-3.

In terms of biological role, located on the platform of the 30S subunit, it bridges several disparate RNA helices of the 16S rRNA. Forms part of the Shine-Dalgarno cleft in the 70S ribosome. The polypeptide is Small ribosomal subunit protein uS11 (Maricaulis maris (strain MCS10) (Caulobacter maris)).